The following is a 182-amino-acid chain: MSAAMMNKSVVLSKQCTKPAATPKVVTSKRSFASTVANKNREMMVWQPFNNKMFETFSFLPPLTDEQISKQVDYILANSWTPCLEFAASDQAYAGNENCIRMGPVASTYQDNRYWTMWKLPMFGCTDGSQVLSEIQACTNAFPDAYIRLVCFDANRQVQISGFLVHRPPSATDYRLPADRQV.

The transit peptide at 1 to 41 (MSAAMMNKSVVLSKQCTKPAATPKVVTSKRSFASTVANKNR) directs the protein to the chloroplast.

Belongs to the RuBisCO small chain family. Heterohexadecamer of 8 large and 8 small subunits.

The protein resides in the plastid. It is found in the chloroplast. Its function is as follows. RuBisCO catalyzes two reactions: the carboxylation of D-ribulose 1,5-bisphosphate, the primary event in carbon dioxide fixation, as well as the oxidative fragmentation of the pentose substrate. Both reactions occur simultaneously and in competition at the same active site. Although the small subunit is not catalytic it is essential for maximal activity. This chain is Ribulose bisphosphate carboxylase small subunit, chloroplastic 4, found in Acetabularia acetabulum (Mermaid's wine glass).